The following is a 318-amino-acid chain: Small ribosomal subunit protein mS26 (318 aa).

The disordered stretch occupies residues 295–318 (IDSKLNPTSNGAGNNGNNNNTTNL). Residues 300-318 (NPTSNGAGNNGNNNNTTNL) are compositionally biased toward low complexity.

Belongs to the mitochondrion-specific ribosomal protein mS26 family. As to quaternary structure, component of the mitochondrial small ribosomal subunit (mt-SSU). Mature yeast 74S mitochondrial ribosomes consist of a small (37S) and a large (54S) subunit. The 37S small subunit contains a 15S ribosomal RNA (15S mt-rRNA) and 34 different proteins. The 54S large subunit contains a 21S rRNA (21S mt-rRNA) and 46 different proteins.

The protein resides in the mitochondrion. Component of the mitochondrial ribosome (mitoribosome), a dedicated translation machinery responsible for the synthesis of mitochondrial genome-encoded proteins, including at least some of the essential transmembrane subunits of the mitochondrial respiratory chain. The mitoribosomes are attached to the mitochondrial inner membrane and translation products are cotranslationally integrated into the membrane. The sequence is that of Small ribosomal subunit protein mS26 (PET123) from Saccharomyces cerevisiae (strain ATCC 204508 / S288c) (Baker's yeast).